The chain runs to 590 residues: Phosphate-repressible phosphate permease pho-4 (590 aa).

A run of 8 helical transmembrane segments spans residues 6-26 (FDYL…NIGA), 44-64 (YLQA…GVGA), 85-105 (ALLM…LTMA), 118-138 (IMGG…VQWV), 149-169 (VFLA…IIFL), 186-206 (FVMV…LLLW), 220-240 (IAGT…IFLM), and 246-266 (IVIL…PLLL). The Cytoplasmic portion of the chain corresponds to 267 to 466 (RRGEVPPPPA…GALPEKGKAD (200 aa)). Residues 297 to 361 (ARRAAQNGDS…PQIKTMVGPR (65 aa)) are disordered. Positions 313 to 322 (VTSSTSNPSA) are enriched in polar residues. Over residues 325 to 345 (DGEKGATITKDDSSYSHDHSE) the composition is skewed to basic and acidic residues. The next 4 membrane-spanning stretches (helical) occupy residues 467 to 487 (VPVW…WTYG), 506 to 525 (GFSM…RLKL), 527 to 547 (VSTT…SGTW), and 561 to 581 (GWFI…GIII).

The protein belongs to the inorganic phosphate transporter (PiT) (TC 2.A.20) family.

Its subcellular location is the cell membrane. Its activity is regulated as follows. Phosphate transport activity is competitively inhibited by vanadate and arsenate. In terms of biological role, high-affinity transporter for external inorganic phosphate. Acts probably as a sodium-phosphate symporter. Component of the high affinity phosphate transport system II (ptsII) necessary for scavenging phosphorus from the environment under conditions of limiting phosphorus. The protein is Phosphate-repressible phosphate permease pho-4 of Neurospora crassa (strain ATCC 24698 / 74-OR23-1A / CBS 708.71 / DSM 1257 / FGSC 987).